The sequence spans 315 residues: 3-oxoacyl-[acyl-carrier-protein] reductase 3, chloroplastic (315 aa).

A chloroplast-targeting transit peptide spans 1–55 (MATTVAATKLTSLKAVKKLGFREIRQVRQWTPLQSSMPHFGSRQSFATSTVVKAQ). Residue 77–101 (VTGASRGIGKAIALSLGKAGCKVLV) participates in NADP(+) binding. A substrate-binding site is contributed by S209. Residue Y222 is the Proton acceptor of the active site.

This sequence belongs to the short-chain dehydrogenases/reductases (SDR) family. Homotetramer.

Its subcellular location is the plastid. It localises to the chloroplast. The enzyme catalyses a (3R)-hydroxyacyl-[ACP] + NADP(+) = a 3-oxoacyl-[ACP] + NADPH + H(+). It functions in the pathway lipid metabolism; fatty acid biosynthesis. The sequence is that of 3-oxoacyl-[acyl-carrier-protein] reductase 3, chloroplastic (bkr3) from Brassica napus (Rape).